The primary structure comprises 360 residues: UDP-N-acetylglucosamine--N-acetylmuramyl-(pentapeptide) pyrophosphoryl-undecaprenol N-acetylglucosamine transferase (360 aa).

UDP-N-acetyl-alpha-D-glucosamine-binding positions include 12 to 14 (TAG), S198, and Q289.

Belongs to the glycosyltransferase 28 family. MurG subfamily.

The protein resides in the cell membrane. It catalyses the reaction Mur2Ac(oyl-L-Ala-gamma-D-Glu-L-Lys-D-Ala-D-Ala)-di-trans,octa-cis-undecaprenyl diphosphate + UDP-N-acetyl-alpha-D-glucosamine = beta-D-GlcNAc-(1-&gt;4)-Mur2Ac(oyl-L-Ala-gamma-D-Glu-L-Lys-D-Ala-D-Ala)-di-trans,octa-cis-undecaprenyl diphosphate + UDP + H(+). It functions in the pathway cell wall biogenesis; peptidoglycan biosynthesis. Cell wall formation. Catalyzes the transfer of a GlcNAc subunit on undecaprenyl-pyrophosphoryl-MurNAc-pentapeptide (lipid intermediate I) to form undecaprenyl-pyrophosphoryl-MurNAc-(pentapeptide)GlcNAc (lipid intermediate II). This Streptococcus equi subsp. equi (strain 4047) protein is UDP-N-acetylglucosamine--N-acetylmuramyl-(pentapeptide) pyrophosphoryl-undecaprenol N-acetylglucosamine transferase.